A 164-amino-acid chain; its full sequence is Large ribosomal subunit protein eL24z (164 aa).

A compositionally biased stretch (basic and acidic residues) spans 117–133; the sequence is ERIKKTKDEKKAKKVEY. A disordered region spans residues 117 to 164; the sequence is ERIKKTKDEKKAKKVEYASKQQKSQVKGNIPKSAAPKAAKMGGGGGRR.

It belongs to the eukaryotic ribosomal protein eL24 family. In terms of assembly, interacts with the cauliflower mosaic virus transactivator TAV to form a TAV/60S complex. Interacts with REIL1 AND REIL2.

In terms of biological role, might have an extraribosomal function in reinitiation of translation. This Arabidopsis thaliana (Mouse-ear cress) protein is Large ribosomal subunit protein eL24z (RPL24A).